The sequence spans 242 residues: ATP-dependent dethiobiotin synthetase BioD (242 aa).

12-17 is an ATP binding site; sequence EVGKTV. Thr16 lines the Mg(2+) pocket. Lys37 is an active-site residue. Ser41 contacts substrate. ATP is bound by residues Asp51 and 112 to 115; that span reads EGAG. Residues Asp51 and Glu112 each contribute to the Mg(2+) site.

This sequence belongs to the dethiobiotin synthetase family. Homodimer. Mg(2+) serves as cofactor.

Its subcellular location is the cytoplasm. It catalyses the reaction (7R,8S)-7,8-diammoniononanoate + CO2 + ATP = (4R,5S)-dethiobiotin + ADP + phosphate + 3 H(+). The protein operates within cofactor biosynthesis; biotin biosynthesis; biotin from 7,8-diaminononanoate: step 1/2. Catalyzes a mechanistically unusual reaction, the ATP-dependent insertion of CO2 between the N7 and N8 nitrogen atoms of 7,8-diaminopelargonic acid (DAPA, also called 7,8-diammoniononanoate) to form a ureido ring. The protein is ATP-dependent dethiobiotin synthetase BioD of Bacillus thuringiensis (strain Al Hakam).